The primary structure comprises 247 residues: Mannose-P-dolichol utilization defect 1 protein (247 aa).

Position 2 is an N-acetylalanine (Ala-2). 7 consecutive transmembrane segments (helical) span residues 37-57 (CLKI…SLLV), 74-94 (LSLQ…VYSI), 100-120 (FSSW…CFLV), 128-145 (VKGV…LALL), 151-171 (LAVV…GKLL), 185-205 (LSAI…FTSV), and 213-233 (MAGV…QVLF). Positions 39–105 (KILLSKGLGL…NNFPFSSWGE (67 aa)) constitute a PQ-loop 1 domain. The region spanning 159–216 (ASNVPAVVVGKLLQAATNYRNGHTGQLSAITVFMLFGGSLARIFTSVQETGDPLMAGV) is the PQ-loop 2 domain.

This sequence belongs to the MPDU1 (TC 2.A.43.3) family.

Its subcellular location is the membrane. Functionally, required for normal utilization of mannose-dolichol phosphate (Dol-P-Man) in the synthesis of N-linked and O-linked oligosaccharides and GPI anchors. This chain is Mannose-P-dolichol utilization defect 1 protein (Mpdu1), found in Mus musculus (Mouse).